The sequence spans 135 residues: Serine protease inhibitor swm-1 (135 aa).

A signal peptide spans 1 to 16; it reads MRILVIITCIVAVATA. 10 cysteine pairs are disulfide-bonded: cysteine 20/cysteine 53, cysteine 29/cysteine 48, cysteine 33/cysteine 44, cysteine 37/cysteine 73, cysteine 55/cysteine 67, cysteine 80/cysteine 114, cysteine 89/cysteine 109, cysteine 93/cysteine 105, cysteine 97/cysteine 133, and cysteine 116/cysteine 127. TIL domains follow at residues 20 to 73 and 80 to 133; these read CEAN…VSEC and CPEN…KKDC. Asparagine 83 is a glycosylation site (N-linked (GlcNAc...) asparagine).

In male, expressed in the vas deferens cuboidal cells and, in posterior body wall and male-specific diagonal muscles. In hermaphrodites, expressed in posterior body wall muscles and spermatheca.

The protein resides in the secreted. The protein localises to the cytoplasmic vesicle. Its subcellular location is the secretory vesicle lumen. In terms of biological role, serine protease inhibitor. Probably by inhibiting serine protease tyr-5 in males, prevents the maturation of spermatids into mature motile spermatozoa until their transfer into a hermaphrodite. Also required for efficient sperm transfer and thus for male fertility. The polypeptide is Serine protease inhibitor swm-1 (Caenorhabditis elegans).